Reading from the N-terminus, the 211-residue chain is Peptidyl-tRNA hydrolase (211 aa).

Position 15 (Tyr-15) interacts with tRNA. His-20 functions as the Proton acceptor in the catalytic mechanism. Residues Phe-66, Asn-68, and Asn-114 each coordinate tRNA. The interval 189 to 211 (TKPPRPKATRPAQAQAAPQAGAD) is disordered. Residues 197-211 (TRPAQAQAAPQAGAD) show a composition bias toward low complexity.

This sequence belongs to the PTH family. In terms of assembly, monomer.

It is found in the cytoplasm. The enzyme catalyses an N-acyl-L-alpha-aminoacyl-tRNA + H2O = an N-acyl-L-amino acid + a tRNA + H(+). Hydrolyzes ribosome-free peptidyl-tRNAs (with 1 or more amino acids incorporated), which drop off the ribosome during protein synthesis, or as a result of ribosome stalling. Its function is as follows. Catalyzes the release of premature peptidyl moieties from peptidyl-tRNA molecules trapped in stalled 50S ribosomal subunits, and thus maintains levels of free tRNAs and 50S ribosomes. The chain is Peptidyl-tRNA hydrolase from Acidovorax ebreus (strain TPSY) (Diaphorobacter sp. (strain TPSY)).